Consider the following 414-residue polypeptide: Glucose-1-phosphate adenylyltransferase (414 aa).

Alpha-D-glucose 1-phosphate contacts are provided by residues tyrosine 99, glycine 164, 181 to 182 (EK), and serine 199.

This sequence belongs to the bacterial/plant glucose-1-phosphate adenylyltransferase family. As to quaternary structure, homotetramer.

The catalysed reaction is alpha-D-glucose 1-phosphate + ATP + H(+) = ADP-alpha-D-glucose + diphosphate. It participates in glycan biosynthesis; glycogen biosynthesis. Involved in the biosynthesis of ADP-glucose, a building block required for the elongation reactions to produce glycogen. Catalyzes the reaction between ATP and alpha-D-glucose 1-phosphate (G1P) to produce pyrophosphate and ADP-Glc. The polypeptide is Glucose-1-phosphate adenylyltransferase (Bifidobacterium longum (strain DJO10A)).